The primary structure comprises 198 residues: 7-methyl-GTP pyrophosphatase (198 aa).

Asp75 acts as the Proton acceptor in catalysis.

This sequence belongs to the Maf family. YceF subfamily. A divalent metal cation is required as a cofactor.

The protein resides in the cytoplasm. The enzyme catalyses N(7)-methyl-GTP + H2O = N(7)-methyl-GMP + diphosphate + H(+). Functionally, nucleoside triphosphate pyrophosphatase that hydrolyzes 7-methyl-GTP (m(7)GTP). May have a dual role in cell division arrest and in preventing the incorporation of modified nucleotides into cellular nucleic acids. This is 7-methyl-GTP pyrophosphatase from Nitrosospira multiformis (strain ATCC 25196 / NCIMB 11849 / C 71).